The chain runs to 557 residues: Putative UDP-glucuronate:xylan alpha-glucuronosyltransferase 4 (557 aa).

Residues 11 to 31 form a helical; Signal-anchor for type II membrane protein membrane-spanning segment; it reads KIFMIYLILVSLSLLGLILPF. Asp365 and Asp367 together coordinate Mn(2+). Residues 365–367, 394–396, 421–425, and 466–471 each bind substrate; these read DAD, NSG, NGGDQ, and HYLGLK. His466 serves as a coordination point for Mn(2+).

This sequence belongs to the glycosyltransferase 8 family. Glycogenin subfamily. Mn(2+) is required as a cofactor.

The protein resides in the golgi apparatus membrane. Functionally, may be involved in the substitutions of the xylan backbone in stem glucuronoxylan. In Arabidopsis thaliana (Mouse-ear cress), this protein is Putative UDP-glucuronate:xylan alpha-glucuronosyltransferase 4 (GUX4).